The chain runs to 690 residues: Eukaryotic translation initiation factor 3 subunit B (690 aa).

Basic and acidic residues predominate over residues 1–11 (MAKKKSEDHSG). A disordered region spans residues 1 to 33 (MAKKKSEDHSGADANDSDYNEEPNFDDPPNFVD). Residues 15 to 25 (NDSDYNEEPNF) show a composition bias toward acidic residues. The region spanning 57–141 (SVVVVDNMPK…YTFAVNLFTD (85 aa)) is the RRM domain. WD repeat units follow at residues 207-246 (TRER…KIQK), 292-331 (GDGM…LLDL), 334-369 (IKIP…TLMK), 442-484 (EIRE…KPSL), and 530-575 (PDHF…IKRT). Residues 613-646 (EQKDRLRLTRASKELLEKRAQLRETFMEYRNKRI) are a coiled coil.

It belongs to the eIF-3 subunit B family. In terms of assembly, component of the eukaryotic translation initiation factor 3 (eIF-3) complex. The eIF-3 complex interacts with pix. Interacts with mxt.

The protein localises to the cytoplasm. RNA-binding component of the eukaryotic translation initiation factor 3 (eIF-3) complex, which is involved in protein synthesis of a specialized repertoire of mRNAs and, together with other initiation factors, stimulates binding of mRNA and methionyl-tRNAi to the 40S ribosome. The eIF-3 complex specifically targets and initiates translation of a subset of mRNAs involved in cell proliferation. This Drosophila grimshawi (Hawaiian fruit fly) protein is Eukaryotic translation initiation factor 3 subunit B.